Reading from the N-terminus, the 525-residue chain is GMP synthase [glutamine-hydrolyzing] (525 aa).

Residues 9–207 (RILILDFGSQ…VRDICQCEAL (199 aa)) form the Glutamine amidotransferase type-1 domain. The active-site Nucleophile is the C86. Active-site residues include H181 and E183. A GMPS ATP-PPase domain is found at 208–400 (WTPAKIIDDA…LGLPYDMLYR (193 aa)). Residue 235 to 241 (SGGVDSS) participates in ATP binding.

Homodimer.

The enzyme catalyses XMP + L-glutamine + ATP + H2O = GMP + L-glutamate + AMP + diphosphate + 2 H(+). It participates in purine metabolism; GMP biosynthesis; GMP from XMP (L-Gln route): step 1/1. Catalyzes the synthesis of GMP from XMP. The chain is GMP synthase [glutamine-hydrolyzing] from Salmonella typhi.